We begin with the raw amino-acid sequence, 278 residues long: Replication protein A 32 kDa subunit B (278 aa).

The OB DNA-binding region spans 70-143 (VVIVGRISRM…RSVNVFSVRP (74 aa)).

It belongs to the replication factor A protein 2 family. Heterotrimer of RPA1, RPA2 and RPA3 (canonical replication protein A complex). Post-translationally, phosphorylated in a cell-cycle-dependent manner (from the S phase until mitosis). In response to DNA damage, recruited to DNA-repair nuclear foci, as a hypophosphorylated form.

It localises to the nucleus. In terms of biological role, component of the replication protein A complex (RPA) required for DNA recombination, repair and replication. The activity of RPA is mediated by single-stranded DNA binding and protein interactions. Required fo cell division in meristems. Involved in the maintenance of transcriptional epigenetic gene silencing (TGS) at specific loci (including some transposons) by regulating histone H3 acetylation, 'Lys-4' and 'Lys-9' methylation. The chain is Replication protein A 32 kDa subunit B (RPA2B) from Arabidopsis thaliana (Mouse-ear cress).